The following is a 778-amino-acid chain: Lon protease (778 aa).

In terms of domain architecture, Lon N-terminal spans 6 to 207 (LPLMALRDMV…TVISMLNSNI (202 aa)). 356–363 (GPPGVGKT) contacts ATP. In terms of domain architecture, Lon proteolytic spans 592–773 (EDQIGSTTGL…DQVLKHALVG (182 aa)). Catalysis depends on residues Ser679 and Lys722.

This sequence belongs to the peptidase S16 family. In terms of assembly, homohexamer. Organized in a ring with a central cavity.

The protein localises to the cytoplasm. It catalyses the reaction Hydrolysis of proteins in presence of ATP.. Functionally, ATP-dependent serine protease that mediates the selective degradation of mutant and abnormal proteins as well as certain short-lived regulatory proteins. Required for cellular homeostasis and for survival from DNA damage and developmental changes induced by stress. Degrades polypeptides processively to yield small peptide fragments that are 5 to 10 amino acids long. Binds to DNA in a double-stranded, site-specific manner. The chain is Lon protease from Rickettsia conorii (strain ATCC VR-613 / Malish 7).